Consider the following 820-residue polypeptide: Chitinase A (820 aa).

The first 21 residues, 1-21 (MKLNKITSYIGFALLSGGALA), serve as a signal peptide directing secretion. The region spanning 158-588 (RVTGAYFVEW…NAMYDGLTAG (431 aa)) is the GH18 domain. The Proton donor role is filled by Glu313.

This sequence belongs to the glycosyl hydrolase 18 family. Chitinase class II subfamily.

The enzyme catalyses Random endo-hydrolysis of N-acetyl-beta-D-glucosaminide (1-&gt;4)-beta-linkages in chitin and chitodextrins.. Stimulated by magnesium ions; inhibited by N-bromosuccinimide and 2-hydroxy-5-nitrobenzyl bromide. The chain is Chitinase A (chiA) from Pseudoalteromonas piscicida.